The chain runs to 54 residues: U-reduvitoxin-Pr1a (54 aa).

The first 19 residues, 1–19, serve as a signal peptide directing secretion; the sequence is MKLLGLLLLVFTFMALAFA. 3 disulfide bridges follow: C24–C39, C31–C44, and C38–C51.

This sequence belongs to the venom Ptu1-like knottin family. Expressed by the venom gland (posterior main gland) (at protein level).

The protein resides in the secreted. Its function is as follows. Binds reversibly and blocks P/Q-type voltage-gated calcium channels (Cav). In Platymeris rhadamanthus (Red spot assassin bug), this protein is U-reduvitoxin-Pr1a.